Consider the following 154-residue polypeptide: Myoglobin (154 aa).

Positions 2–148 constitute a Globin domain; sequence GLSDQEWQQV…FRNDMASKYK (147 aa). Nitrite is bound at residue His65. Position 65 (His65) interacts with O2. A heme b-binding site is contributed by His94.

It belongs to the globin family. In terms of assembly, monomeric.

It is found in the cytoplasm. The protein resides in the sarcoplasm. It carries out the reaction Fe(III)-heme b-[protein] + nitric oxide + H2O = Fe(II)-heme b-[protein] + nitrite + 2 H(+). The catalysed reaction is H2O2 + AH2 = A + 2 H2O. Monomeric heme protein which primary function is to store oxygen and facilitate its diffusion within muscle tissues. Reversibly binds oxygen through a pentacoordinated heme iron and enables its timely and efficient release as needed during periods of heightened demand. Depending on the oxidative conditions of tissues and cells, and in addition to its ability to bind oxygen, it also has a nitrite reductase activity whereby it regulates the production of bioactive nitric oxide. Under stress conditions, like hypoxia and anoxia, it also protects cells against reactive oxygen species thanks to its pseudoperoxidase activity. This Anas poecilorhyncha (Indian spot-billed duck) protein is Myoglobin (MB).